A 408-amino-acid chain; its full sequence is Multidrug resistance protein MdtG (408 aa).

The next 10 membrane-spanning stretches (helical) occupy residues 16–36, 58–78, 92–112, 115–135, 146–166, 173–193, 221–241, 256–276, 290–310, and 378–398; these read LIVA…VMPF, IVFS…GGLA, LGMG…QFLI, ALLG…ATQV, TLST…GLLA, PVFF…LFCI, ILSL…IAPI, VAFI…LSAP, ILIT…YVQT, and AVFL…WNSL.

The protein belongs to the major facilitator superfamily. DHA1 family. MdtG (TC 2.A.1.2.20) subfamily.

It localises to the cell inner membrane. Its function is as follows. Confers resistance to fosfomycin and deoxycholate. This chain is Multidrug resistance protein MdtG, found in Escherichia coli (strain SMS-3-5 / SECEC).